The primary structure comprises 449 residues: Probable secreted beta-glucosidase ARB_04747 (449 aa).

An N-terminal signal peptide occupies residues 1 to 21 (MKFSSGILSLAVAASVQSVQA). Asn57 is a glycosylation site (N-linked (GlcNAc...) asparagine). The segment at 96 to 185 (SPPACPAPSY…RPFPDGEIDC (90 aa)) is disordered. The span at 98 to 125 (PACPAPSYVPSPPAAPSSPPAAPQPPSK) shows a compositional bias: pro residues. A compositionally biased stretch (basic and acidic residues) spans 131–150 (EEPKKPEEPKKPEGPKKPEG).

Belongs to the SUN family.

The protein localises to the secreted. It is found in the cell wall. Functionally, cell surface beta-glucosidase involved in cytokinesis, cell wall biogenesis, adhesion to host tissue; thus playing an important role in the host-pathogen interaction. Has hydrolytic activity on linear (1-&gt;3)-beta-D-glucans such as laminaribiose and other laminarioligosaccharides. The polypeptide is Probable secreted beta-glucosidase ARB_04747 (Arthroderma benhamiae (strain ATCC MYA-4681 / CBS 112371) (Trichophyton mentagrophytes)).